The chain runs to 307 residues: MFNGEPGPASAGASRNVVRSSSISGEICGSQQAGGGAGTTTAKKRRSSLGAKMVAIVGLTQWSKSTLQLPQPEGATKKLRSNIRRSTETGIAVEMRSRVTRQGSRESTDGSTNSNSSEGTFIFPTRLGAESQFSDFLDGLGPAQIVGRQTLATPPMGDVHIAIMDRSGQLEVEVIEARGLTPKPGSKSLPATYIKAYLLENGACVAKKKTKVAKKTCDPLYQQALLFDEGPQGKVLQVIVWGDYGRMDHKCFMGMAQIMLDELDLSAAVTGWYKLFPTSSVADSTLGSLTRRLSQSSLESATSPSCS.

Positions 86–120 are disordered; that stretch reads STETGIAVEMRSRVTRQGSRESTDGSTNSNSSEGT. A compositionally biased stretch (polar residues) spans 109-119; that stretch reads DGSTNSNSSEG. The 119-residue stretch at 155-273 folds into the C2 domain; it reads PMGDVHIAIM…DLSAAVTGWY (119 aa). 2 positions are modified to phosphoserine: S294 and S297.

As to quaternary structure, binds PPFIA3. Does not bind RAB3.

The protein localises to the synapse. In terms of biological role, regulates synaptic membrane exocytosis. The protein is Regulating synaptic membrane exocytosis protein 3 (Rims3) of Mus musculus (Mouse).